Here is a 4451-residue protein sequence, read N- to C-terminus: Gramicidin S synthase 2 (4451 aa).

Positions 467–1044 are domain 1 (proline-activating); it reads DKTIHQLFTE…IQEISNYING (578 aa). 4 Carrier domains span residues 971-1046, 2006-2081, 3052-3127, and 4090-4165; these read VPTN…NGAK, APSS…ADGQ, RPRT…EETD, and APRN…THQE. Residues S1006, S2041, S3087, and S4125 each carry the O-(pantetheine 4'-phosphoryl)serine modification. The domain 2 (valine-activating) stretch occupies residues 1521–2080; the sequence is DHVAVGWKDQ…SALAQYIADG (560 aa). Residues 2538–3135 are domain 3 (ornithine-activating); that stretch reads YATNKIFHEL…TDTEQYMAIQ (598 aa). The domain 4 (leucine-activating) stretch occupies residues 3591 to 4173; that stretch reads IQELFEEQVK…QESENNVHQP (583 aa).

It belongs to the ATP-dependent AMP-binding enzyme family. As to quaternary structure, large multienzyme complex of GrsA and GrsB. It depends on pantetheine 4'-phosphate as a cofactor.

It participates in antibiotic biosynthesis; gramicidin S biosynthesis. In terms of biological role, this protein is a multifunctional enzyme, able to activate and polymerize the amino acids Pro, Val, Orn and Leu. Activation sites for these AA consist of individual domains. The sequence is that of Gramicidin S synthase 2 (grsB) from Aneurinibacillus migulanus (Bacillus migulanus).